Here is a 1047-residue protein sequence, read N- to C-terminus: UPF0182 protein Mlut_14990 (1047 aa).

Composition is skewed to gly residues over residues 1-27 (MSFGQGGGGPFGGPPRDGGGTAGGQSG) and 49-59 (GPGGPFGGGGS). A disordered region spans residues 1–66 (MSFGQGGGGP…GGSSAARGRG (66 aa)). The next 7 membrane-spanning stretches (helical) occupy residues 71–91 (PSALVLTIIAVAVLVGLFVVF), 114–134 (VLAKGALFLIAGLGMALAVWL), 168–188 (LVFLGVPLVLGVFAGSTAMNG), 214–234 (FFMATLPFLTLVVGYLISVVL), 266–286 (AHIGITLAVFLLLQGVNFWLN), 314–334 (AILAVTAVIVAGLFVWTVVSG), and 341–361 (IGTAVLVITALVVGTAYPFIV). Disordered stretches follow at residues 544 to 568 (GAPAVERDRPQTADSQEDTAYTFSG), 941 to 965 (GDSGAVTPEEKQAEAPAPGEKPTAP), and 1007 to 1047 (EALK…TPSG). Positions 555-565 (TADSQEDTAYT) are enriched in polar residues. The segment covering 1015-1037 (ADDALGGDAPAQEQAPAEASPAP) has biased composition (low complexity). Over residues 1038-1047 (SSSPSPTPSG) the composition is skewed to pro residues.

The protein belongs to the UPF0182 family.

The protein localises to the cell membrane. The polypeptide is UPF0182 protein Mlut_14990 (Micrococcus luteus (strain ATCC 4698 / DSM 20030 / JCM 1464 / CCM 169 / CCUG 5858 / IAM 1056 / NBRC 3333 / NCIMB 9278 / NCTC 2665 / VKM Ac-2230) (Micrococcus lysodeikticus)).